The primary structure comprises 178 residues: Non-specific lipid transfer protein-like 1 (178 aa).

A signal peptide spans 1–26 (MAVAARAAAVACLLVVGLAAVAGVDG). Intrachain disulfides connect Cys-50-Cys-68 and Cys-69-Cys-110. An N-linked (GlcNAc...) asparagine glycan is attached at Asn-99. The GPI-anchor amidated alanine moiety is linked to residue Ala-149. The propeptide at 150–178 (AARSPMASTTAVLVVAAAVAAPLLAFFHF) is removed in mature form.

It belongs to the plant LTP family. Post-translationally, O-glycosylated on hydroxyprolines; noncontiguous hydroxylproline residues are glycosylated with arabinogalactan. Expressed in roots, stems, leaves, flowers and seeds.

Its subcellular location is the vacuole. The protein resides in the aleurone grain membrane. In Oryza sativa subsp. japonica (Rice), this protein is Non-specific lipid transfer protein-like 1 (LTPL1).